A 440-amino-acid chain; its full sequence is Xylose isomerase (440 aa).

Residues histidine 101 and aspartate 104 contribute to the active site. Positions 232, 268, 271, 296, 307, 309, and 339 each coordinate Mg(2+).

Belongs to the xylose isomerase family. As to quaternary structure, homotetramer. Mg(2+) serves as cofactor.

The protein localises to the cytoplasm. It carries out the reaction alpha-D-xylose = alpha-D-xylulofuranose. This Salmonella paratyphi B (strain ATCC BAA-1250 / SPB7) protein is Xylose isomerase.